A 939-amino-acid chain; its full sequence is Valine--tRNA ligase (939 aa).

Residues 47–57 (PNVTGILHMGH) carry the 'HIGH' region motif. Residues 563 to 567 (KLSKS) carry the 'KMSKS' region motif. An ATP-binding site is contributed by Lys-566. Residues 874-939 (EHLAKERVRL…QSILDKLASL (66 aa)) adopt a coiled-coil conformation.

This sequence belongs to the class-I aminoacyl-tRNA synthetase family. ValS type 1 subfamily. Monomer.

It localises to the cytoplasm. It carries out the reaction tRNA(Val) + L-valine + ATP = L-valyl-tRNA(Val) + AMP + diphosphate. Functionally, catalyzes the attachment of valine to tRNA(Val). As ValRS can inadvertently accommodate and process structurally similar amino acids such as threonine, to avoid such errors, it has a 'posttransfer' editing activity that hydrolyzes mischarged Thr-tRNA(Val) in a tRNA-dependent manner. The chain is Valine--tRNA ligase from Chlamydia trachomatis serovar A (strain ATCC VR-571B / DSM 19440 / HAR-13).